The chain runs to 154 residues: Endoribonuclease YbeY (154 aa).

3 residues coordinate Zn(2+): H113, H117, and H123.

It belongs to the endoribonuclease YbeY family. Zn(2+) is required as a cofactor.

The protein resides in the cytoplasm. In terms of biological role, single strand-specific metallo-endoribonuclease involved in late-stage 70S ribosome quality control and in maturation of the 3' terminus of the 16S rRNA. The polypeptide is Endoribonuclease YbeY (Vibrio vulnificus (strain CMCP6)).